The following is a 58-amino-acid chain: Photosystem II reaction center protein K (58 aa).

Residues methionine 1–alanine 21 constitute a propeptide that is removed on maturation. The chain crosses the membrane as a helical span at residues isoleucine 29 to phenylalanine 49.

It belongs to the PsbK family. In terms of assembly, PSII is composed of 1 copy each of membrane proteins PsbA, PsbB, PsbC, PsbD, PsbE, PsbF, PsbH, PsbI, PsbJ, PsbK, PsbL, PsbM, PsbT, PsbX, PsbY, PsbZ, Psb30/Ycf12, at least 3 peripheral proteins of the oxygen-evolving complex and a large number of cofactors. It forms dimeric complexes.

Its subcellular location is the plastid. It localises to the chloroplast thylakoid membrane. In terms of biological role, one of the components of the core complex of photosystem II (PSII). PSII is a light-driven water:plastoquinone oxidoreductase that uses light energy to abstract electrons from H(2)O, generating O(2) and a proton gradient subsequently used for ATP formation. It consists of a core antenna complex that captures photons, and an electron transfer chain that converts photonic excitation into a charge separation. This Psilotum nudum (Whisk fern) protein is Photosystem II reaction center protein K.